A 189-amino-acid polypeptide reads, in one-letter code: Translation initiation factor IF-3 (189 aa).

Belongs to the IF-3 family. In terms of assembly, monomer.

It is found in the cytoplasm. In terms of biological role, IF-3 binds to the 30S ribosomal subunit and shifts the equilibrium between 70S ribosomes and their 50S and 30S subunits in favor of the free subunits, thus enhancing the availability of 30S subunits on which protein synthesis initiation begins. The polypeptide is Translation initiation factor IF-3 (Corynebacterium glutamicum (strain ATCC 13032 / DSM 20300 / JCM 1318 / BCRC 11384 / CCUG 27702 / LMG 3730 / NBRC 12168 / NCIMB 10025 / NRRL B-2784 / 534)).